The primary structure comprises 556 residues: MDKRHDPSRRIIAPHGSQLSCKSWLTEAPMRMLMNNLHPDVAERPEDLVVYGGIGRAARDWDCYDKIIEVLKRLEDDETLLVQSGKPVGVFRTHADAPRVLIANSNLVPHWANWEHFNELDKQGLAMYGQMTAGSWIYIGTQGIVQGTYETFVSVAKQHFGGISKGKWILTGGLGGMGGAQTLAGTMAGFSVLACEVDETRIDFRLRTRYVDKKATSLDEALAMIEAANQAGKPVSVGLLANAADVFAELVKRGITPDVVTDQTSAHDPLNGYLPQGWTMAQAADMRKTDEAAVVKAAKASMAVQVQAMLDLQAAGAATLDYGNNIRQMAFETGVKNAFDFPGFVPAYIRPLFCEGIGPFRWVALSGDPEDIYKTDAKVKELIPDNPHLHNWLDMARERIAFQGLPARICWVGLKDRARLAQAFNEMVKNGELSAPIVIGRDHLDSGSVASPNRETESMLDGSDAVSDWPLLNALLNTASGATWVSLHHGGGVGMGFSQHSGVVIVCDGTETAAKRVGRVLWNDPATGVMRHADAGYEIAKNCAKEQGLDLPMLKD.

Residues G52–G53, Q130, G176–G178, E196, R201, N242–A243, Q263–H267, Y273–L274, and Y322 each bind NAD(+). The active site involves C410. G492 is a binding site for NAD(+).

Belongs to the urocanase family. Requires NAD(+) as cofactor.

It is found in the cytoplasm. The catalysed reaction is 4-imidazolone-5-propanoate = trans-urocanate + H2O. Its pathway is amino-acid degradation; L-histidine degradation into L-glutamate; N-formimidoyl-L-glutamate from L-histidine: step 2/3. Its function is as follows. Catalyzes the conversion of urocanate to 4-imidazolone-5-propionate. The sequence is that of Urocanate hydratase from Shewanella oneidensis (strain ATCC 700550 / JCM 31522 / CIP 106686 / LMG 19005 / NCIMB 14063 / MR-1).